A 191-amino-acid chain; its full sequence is Uridylate kinase (191 aa).

Residue 12-17 (GAGKGT) participates in ATP binding. Positions 33–63 (SAGDCLREEQNRPGSKYGNLIKEYIKDGKIV) are NMP. A ribonucleoside 5'-phosphate contacts are provided by residues arginine 39, 61 to 63 (KIV), 91 to 94 (GFPR), and glutamine 98. Positions 128-138 (HRGKTSGRSDD) are LID. Position 129 (arginine 129) interacts with ATP. A ribonucleoside 5'-phosphate-binding residues include arginine 135 and arginine 146. Glutamine 174 contacts ATP.

It belongs to the adenylate kinase family. UMP-CMP kinase subfamily. Monomer. The cofactor is Mg(2+).

It is found in the cytoplasm. It localises to the nucleus. It catalyses the reaction UMP + ATP = UDP + ADP. Its function is as follows. Catalyzes the phosphorylation of pyrimidine nucleoside monophosphates at the expense of ATP. Plays an important role in de novo pyrimidine nucleotide biosynthesis. Has preference for UMP and dUMP as phosphate acceptors, but can also use CMP, dCMP and AMP. The sequence is that of Uridylate kinase from Schizosaccharomyces pombe (strain 972 / ATCC 24843) (Fission yeast).